The chain runs to 146 residues: Hemoglobin subunit beta (146 aa).

At V1 the chain carries N-acetylvaline. One can recognise a Globin domain in the interval 2–146 (ELTAEEKAAV…VANALAHKYH (145 aa)). S44 is modified (phosphoserine). Position 59 is an N6-acetyllysine (K59). Heme b is bound at residue H63. At K82 the chain carries N6-acetyllysine. H92 serves as a coordination point for heme b. C93 is subject to S-nitrosocysteine. The residue at position 144 (K144) is an N6-acetyllysine.

Belongs to the globin family. In terms of assembly, heterotetramer of two alpha chains and two beta chains. As to expression, red blood cells.

In terms of biological role, involved in oxygen transport from the lung to the various peripheral tissues. The protein is Hemoglobin subunit beta (HBB) of Ceratotherium simum (White rhinoceros).